The sequence spans 199 residues: Streptomycin biosynthesis protein StrG (199 aa).

The protein operates within antibiotic biosynthesis; streptomycin biosynthesis. Functionally, may be involved in the formation of N-methyl-L-glucosamine. The sequence is that of Streptomycin biosynthesis protein StrG (strG) from Streptomyces griseus.